A 378-amino-acid polypeptide reads, in one-letter code: Anhydro-N-acetylmuramic acid kinase (378 aa).

Residue G9 to D16 coordinates ATP.

It belongs to the anhydro-N-acetylmuramic acid kinase family.

The catalysed reaction is 1,6-anhydro-N-acetyl-beta-muramate + ATP + H2O = N-acetyl-D-muramate 6-phosphate + ADP + H(+). It participates in amino-sugar metabolism; 1,6-anhydro-N-acetylmuramate degradation. It functions in the pathway cell wall biogenesis; peptidoglycan recycling. In terms of biological role, catalyzes the specific phosphorylation of 1,6-anhydro-N-acetylmuramic acid (anhMurNAc) with the simultaneous cleavage of the 1,6-anhydro ring, generating MurNAc-6-P. Is required for the utilization of anhMurNAc either imported from the medium or derived from its own cell wall murein, and thus plays a role in cell wall recycling. This Prochlorococcus marinus (strain NATL1A) protein is Anhydro-N-acetylmuramic acid kinase.